We begin with the raw amino-acid sequence, 414 residues long: 5-aminolevulinate synthase (414 aa).

Positions 22, 133, and 152 each coordinate substrate. Pyridoxal 5'-phosphate-binding residues include Ser-185, His-213, and Thr-241. Lys-244 is a catalytic residue. Residue Lys-244 is modified to N6-(pyridoxal phosphate)lysine. Pyridoxal 5'-phosphate contacts are provided by Thr-273 and Thr-274. Thr-359 serves as a coordination point for substrate.

Belongs to the class-II pyridoxal-phosphate-dependent aminotransferase family. Homodimer. Pyridoxal 5'-phosphate is required as a cofactor.

It catalyses the reaction succinyl-CoA + glycine + H(+) = 5-aminolevulinate + CO2 + CoA. It functions in the pathway porphyrin-containing compound metabolism; protoporphyrin-IX biosynthesis; 5-aminolevulinate from glycine: step 1/1. In Rickettsia prowazekii (strain Madrid E), this protein is 5-aminolevulinate synthase (hemA).